Reading from the N-terminus, the 284-residue chain is Signal peptidase I (284 aa).

A helical membrane pass occupies residues Asn-4–Leu-22. Over Asp-23–Leu-58 the chain is Cytoplasmic. Residues Leu-59–Arg-77 traverse the membrane as a helical segment. Residues Ser-78–Lys-284 are Periplasmic-facing. Catalysis depends on residues Ser-90 and Lys-145.

Belongs to the peptidase S26 family.

Its subcellular location is the cell inner membrane. The catalysed reaction is Cleavage of hydrophobic, N-terminal signal or leader sequences from secreted and periplasmic proteins.. This is Signal peptidase I (lepB) from Pseudomonas fluorescens.